Reading from the N-terminus, the 177-residue chain is Secretion monitor (177 aa).

A signal peptide spans 1-30 (MIGILNRWRQFGRRYFWPHLLLGMVAASLG).

It belongs to the SecM family.

The protein localises to the cytoplasm. It is found in the cytosol. It localises to the periplasm. Regulates secA expression by translational coupling of the secM secA operon. Translational pausing at a specific Pro residue 5 residues before the end of the protein may allow disruption of a mRNA repressor helix that normally suppresses secA translation initiation. This Yersinia enterocolitica serotype O:8 / biotype 1B (strain NCTC 13174 / 8081) protein is Secretion monitor.